Here is a 170-residue protein sequence, read N- to C-terminus: MGSTDGKIAIYPGTFDPLTNGHASLIQRGCQIFDHIVVAVANDTPKTPLFTIDERVQMAQEALEGVGSITVEPFSGLLVDYAERRGAGVILRGLRAVSDFEYEFQLALMNRKMKRHIQTVFLMTDYKWLYISSTIIKAAASLGGDIKGLVPDNVYRRLREKYGYPYPLNG.

T14 lines the substrate pocket. ATP contacts are provided by residues 14–15 and H22; that span reads TF. Positions 46, 78, and 92 each coordinate substrate. ATP-binding positions include 93–95, E103, and 128–134; these read GLR and WLYISST.

The protein belongs to the bacterial CoaD family. Homohexamer. The cofactor is Mg(2+).

The protein localises to the cytoplasm. The catalysed reaction is (R)-4'-phosphopantetheine + ATP + H(+) = 3'-dephospho-CoA + diphosphate. The protein operates within cofactor biosynthesis; coenzyme A biosynthesis; CoA from (R)-pantothenate: step 4/5. Its function is as follows. Reversibly transfers an adenylyl group from ATP to 4'-phosphopantetheine, yielding dephospho-CoA (dPCoA) and pyrophosphate. This chain is Phosphopantetheine adenylyltransferase, found in Oleidesulfovibrio alaskensis (strain ATCC BAA-1058 / DSM 17464 / G20) (Desulfovibrio alaskensis).